Here is a 177-residue protein sequence, read N- to C-terminus: Cytochrome c oxidase assembly protein CtaG (177 aa).

At 1–8 the chain is on the cytoplasmic side; the sequence is MTQKAKNT. A helical; Signal-anchor for type II membrane protein transmembrane segment spans residues 9-29; that stretch reads IYLLILIILSMLCLVYASVPL. Residues 30-177 lie on the Periplasmic side of the membrane; the sequence is YSIFCKVTGY…TFFKYKETTK (148 aa).

The protein belongs to the COX11/CtaG family.

The protein resides in the cell inner membrane. Exerts its effect at some terminal stage of cytochrome c oxidase synthesis, probably by being involved in the insertion of the copper B into subunit I. The chain is Cytochrome c oxidase assembly protein CtaG from Ehrlichia ruminantium (strain Gardel).